A 691-amino-acid polypeptide reads, in one-letter code: Elongation factor G (691 aa).

Residues 8-283 form the tr-type G domain; sequence EDYRNFGIMA…AVVDFLPSPI (276 aa). GTP-binding positions include 17–24, 81–85, and 135–138; these read AHIDAGKT, DTPGH, and NKMD.

The protein belongs to the TRAFAC class translation factor GTPase superfamily. Classic translation factor GTPase family. EF-G/EF-2 subfamily.

The protein resides in the cytoplasm. Its function is as follows. Catalyzes the GTP-dependent ribosomal translocation step during translation elongation. During this step, the ribosome changes from the pre-translocational (PRE) to the post-translocational (POST) state as the newly formed A-site-bound peptidyl-tRNA and P-site-bound deacylated tRNA move to the P and E sites, respectively. Catalyzes the coordinated movement of the two tRNA molecules, the mRNA and conformational changes in the ribosome. The chain is Elongation factor G from Xanthobacter autotrophicus (strain ATCC BAA-1158 / Py2).